Here is a 185-residue protein sequence, read N- to C-terminus: Tetrahydromethanopterin S-methyltransferase subunit A 2 (185 aa).

Residues 1 to 21 are Cytoplasmic-facing; the sequence is MVDKKVDKKPVPEDWPHIVGD. A helical transmembrane segment spans residues 22-38; the sequence is YVVGDAESPVAVVTLGS. The Extracellular portion of the chain corresponds to 39–185; sequence HMEDEPVRAG…LNKNKPDENT (147 aa). A 5-hydroxybenzimidazolylcob(I)amide-binding site is contributed by His88.

Belongs to the MtrA family. As to quaternary structure, the complex is composed of 8 subunits; MtrA, MtrB, MtrC, MtrD, MtrE, MtrF, MtrG and MtrH. 5-hydroxybenzimidazolylcob(I)amide serves as cofactor.

It localises to the cell membrane. It carries out the reaction 5-methyl-5,6,7,8-tetrahydromethanopterin + coenzyme M + 2 Na(+)(in) = 5,6,7,8-tetrahydromethanopterin + methyl-coenzyme M + 2 Na(+)(out). It participates in one-carbon metabolism; methanogenesis from CO(2); methyl-coenzyme M from 5,10-methylene-5,6,7,8-tetrahydromethanopterin: step 2/2. In terms of biological role, part of a complex that catalyzes the formation of methyl-coenzyme M and tetrahydromethanopterin from coenzyme M and methyl-tetrahydromethanopterin. This is an energy-conserving, sodium-ion translocating step. The chain is Tetrahydromethanopterin S-methyltransferase subunit A 2 from Methanothermobacter marburgensis (strain ATCC BAA-927 / DSM 2133 / JCM 14651 / NBRC 100331 / OCM 82 / Marburg) (Methanobacterium thermoautotrophicum).